The following is a 71-amino-acid chain: Small ribosomal subunit protein bS18 (71 aa).

The protein belongs to the bacterial ribosomal protein bS18 family. As to quaternary structure, part of the 30S ribosomal subunit. Forms a tight heterodimer with protein bS6.

Binds as a heterodimer with protein bS6 to the central domain of the 16S rRNA, where it helps stabilize the platform of the 30S subunit. This chain is Small ribosomal subunit protein bS18, found in Acaryochloris marina (strain MBIC 11017).